Reading from the N-terminus, the 71-residue chain is Omega-conotoxin-like Ac6.4 (71 aa).

The N-terminal stretch at 1-22 is a signal peptide; sequence MKLTCVVIVAVLLLTACQLLTA. Residues 23-45 constitute a propeptide that is removed on maturation; it reads DDSRGTQKHRALRSDTKLSMSTR. 3 disulfide bridges follow: Cys46–Cys61, Cys53–Cys65, and Cys60–Cys70. At Cys70 the chain carries Cysteine amide.

It belongs to the conotoxin O1 superfamily. Expressed by the venom duct.

It localises to the secreted. Functionally, omega-conotoxins act at presynaptic membranes, they bind and block voltage-gated calcium channels (Cav). The protein is Omega-conotoxin-like Ac6.4 of Conus achatinus (Little frog cone).